Reading from the N-terminus, the 322-residue chain is Corticotropin-releasing factor-binding protein (322 aa).

A signal peptide spans 1–24; it reads MSPNFKLQCHFTLILLTALRGESR. Cystine bridges form between Cys-60–Cys-81, Cys-104–Cys-141, Cys-183–Cys-205, Cys-237–Cys-264, and Cys-277–Cys-318. Residue Asn-204 is glycosylated (N-linked (GlcNAc...) asparagine).

The protein belongs to the CRF-binding protein family.

Its subcellular location is the secreted. Its function is as follows. Binds CRF and inactivates it. May prevent inappropriate pituitary-adrenal stimulation in pregnancy. The protein is Corticotropin-releasing factor-binding protein (Crhbp) of Rattus norvegicus (Rat).